The following is a 300-amino-acid chain: ATP synthase gamma chain (300 aa).

It belongs to the ATPase gamma chain family. In terms of assembly, F-type ATPases have 2 components, CF(1) - the catalytic core - and CF(0) - the membrane proton channel. CF(1) has five subunits: alpha(3), beta(3), gamma(1), delta(1), epsilon(1). CF(0) has three main subunits: a, b and c.

It localises to the cell membrane. Functionally, produces ATP from ADP in the presence of a proton gradient across the membrane. The gamma chain is believed to be important in regulating ATPase activity and the flow of protons through the CF(0) complex. The chain is ATP synthase gamma chain from Acidothermus cellulolyticus (strain ATCC 43068 / DSM 8971 / 11B).